The chain runs to 155 residues: Small ribosomal subunit protein uS7cz/uS7cy (155 aa).

The protein belongs to the universal ribosomal protein uS7 family. In terms of assembly, part of the 30S ribosomal subunit.

The protein resides in the plastid. It is found in the chloroplast. Functionally, one of the primary rRNA binding proteins, it binds directly to 16S rRNA where it nucleates assembly of the head domain of the 30S subunit. The protein is Small ribosomal subunit protein uS7cz/uS7cy (rps7-A) of Calycanthus floridus var. glaucus (Eastern sweetshrub).